Reading from the N-terminus, the 263-residue chain is MEPNRAFHEAPLPLFAPAPGSAGDEAPLAGAASVACGTRPPSYIADHRARLRERFMQGGAAAMPDYELLELVLFRAIPRQDVKPLARRLLDRFGDFNRVLSAPPARLAEVSGLGPAVLQELKIVEAAAQRLARSRVMHRPVLTSWDALLDYCHTAMAHGEIEQFRVLYLDRKNVLIADEEQARGTVDHVPVYPREIMRRALELSASALILVHNHPSGDPTPSQADIGMTNRIVAAAEVMGIAVHDHLIIGRSRELSFRSEGLL.

Positions 141-263 constitute an MPN domain; the sequence is VLTSWDALLD…ELSFRSEGLL (123 aa). His-212, His-214, and Asp-225 together coordinate Zn(2+). Positions 212–225 match the JAMM motif motif; it reads HNHPSGDPTPSQAD.

It belongs to the UPF0758 family.

This Paracoccus denitrificans (strain Pd 1222) protein is UPF0758 protein Pden_2304.